We begin with the raw amino-acid sequence, 729 residues long: Disintegrin and metalloproteinase domain-containing protein 21 (729 aa).

The N-terminal stretch at 1-39 (MECFIMLGADARTLMRVTLLLLWLKALPSLIDLSQTGST) is a signal peptide. Positions 40 to 209 (QYLSSPEVVI…MKQNYGKLWP (170 aa)) are excised as a propeptide. Residue asparagine 169 is glycosylated (N-linked (GlcNAc...) asparagine). Positions 176 to 183 (MLCSLTEK) match the Cysteine switch motif. Zn(2+) is bound at residue cysteine 178. Topologically, residues 210–685 (HMWFLELAVV…DSGPTSQKRR (476 aa)) are extracellular. Residues 212-402 (WFLELAVVVD…NQGTCLYNHP (191 aa)) enclose the Peptidase M12B domain. The N-linked (GlcNAc...) asparagine glycan is linked to asparagine 231. Disulfide bonds link cysteine 320/cysteine 397, cysteine 360/cysteine 382, and cysteine 362/cysteine 367. Histidine 345 contacts Zn(2+). Glutamate 346 is an active-site residue. Zn(2+) is bound by residues histidine 349 and histidine 355. Asparagine 381, asparagine 441, and asparagine 482 each carry an N-linked (GlcNAc...) asparagine glycan. A Disintegrin domain is found at 410–496 (VKRCGNGMVE…QCPEDGYVQD (87 aa)). 4 disulfides stabilise this stretch: cysteine 468/cysteine 488, cysteine 638/cysteine 649, cysteine 643/cysteine 655, and cysteine 657/cysteine 666. The EGF-like domain maps to 638–667 (CLPETCNRKGVCNNKHHCHCDYGWSPPFCL). The chain crosses the membrane as a helical span at residues 686 to 706 (VIITVLSITVPVLSILICLLI). The Cytoplasmic segment spans residues 707 to 729 (AGLYRIYCKIPSGPKETKASSPG).

Zn(2+) is required as a cofactor. Has no obvious cleavage site for furin endopeptidase, suggesting that the proteolytic processing is regulated. In terms of tissue distribution, highly expressed in Leydig cells. Expressed also in cauda epididymidis, vas deferens, convoluted tubules, kidney and the parietal cells of stomach. Not detected on developing spermatocytes or mature sperm.

It localises to the membrane. In terms of biological role, may be involved in sperm maturation and/or fertilization. May also be involved in epithelia functions associated with establishing and maintaining gradients of ions or nutrients. In Mus musculus (Mouse), this protein is Disintegrin and metalloproteinase domain-containing protein 21 (Adam21).